A 686-amino-acid chain; its full sequence is Tripartite terminase subunit 3 (686 aa).

A Walker A motif motif is present at residues 219-226 (IPRRHGKT). Positions 314 to 319 (LLYVDE) match the Walker B motif motif. The active-site For ATPase activity is the Glu-319. Catalysis depends on for nuclease activity residues Asp-475, Glu-548, and Asp-660.

The protein belongs to the herpesviridae TRM3 protein family. As to quaternary structure, interacts with the terminase subunits TRM1 and TRM2. Interacts with portal protein.

It localises to the host nucleus. Component of the molecular motor that translocates viral genomic DNA in empty capsid during DNA packaging. Forms a tripartite terminase complex together with TRM1 and TRM2 in the host cytoplasm. Once the complex reaches the host nucleus, it interacts with the capsid portal vertex. This portal forms a ring in which genomic DNA is translocated into the capsid. TRM3 carries an RNase H-like nuclease activity that plays an important role for the cleavage of concatemeric viral DNA into unit length genomes. The protein is Tripartite terminase subunit 3 of Equine herpesvirus 2 (strain 86/87) (EHV-2).